The primary structure comprises 147 residues: Antiholin-like protein LrgA (147 aa).

4 consecutive transmembrane segments (helical) span residues 12 to 32 (PAHF…SKII), 35 to 55 (FMPI…VLLC), 74 to 94 (NIGL…GVIS), and 98 to 118 (FLII…TGYV).

This sequence belongs to the CidA/LrgA family. LrgA subfamily.

The protein localises to the cell membrane. In terms of biological role, inhibits the expression or activity of extracellular murein hydrolases by interacting, possibly with LrgB, with the holin-like proteins CidA and/or CidB. The LrgAB and CidAB proteins may affect the proton motive force of the membrane. May be involved in programmed cell death (PCD), possibly triggering PCD in response to antibiotics and environmental stresses. In Staphylococcus aureus (strain MSSA476), this protein is Antiholin-like protein LrgA.